The sequence spans 689 residues: UvrABC system protein C (689 aa).

Polar residues predominate over residues 1–19; the sequence is MTSDSSDTAKQIGSGQPSG. A disordered region spans residues 1–59; the sequence is MTSDSSDTAKQIGSGQPSGSPADMRRRDGVAPEQEVDPASLETDEDDEARLPDLPDEPV. Residues 42 to 59 are compositionally biased toward acidic residues; it reads ETDEDDEARLPDLPDEPV. The GIY-YIG domain occupies 83-161; that stretch reads TSPGVYRMMN…IKQLRPRFNV (79 aa). One can recognise a UVR domain in the interval 271-306; the sequence is RAVKEDLARAMEQAAADLAFERAALYRDRLAALSAI.

The protein belongs to the UvrC family. In terms of assembly, interacts with UvrB in an incision complex.

Its subcellular location is the cytoplasm. Its function is as follows. The UvrABC repair system catalyzes the recognition and processing of DNA lesions. UvrC both incises the 5' and 3' sides of the lesion. The N-terminal half is responsible for the 3' incision and the C-terminal half is responsible for the 5' incision. The polypeptide is UvrABC system protein C (Nitrobacter winogradskyi (strain ATCC 25391 / DSM 10237 / CIP 104748 / NCIMB 11846 / Nb-255)).